Here is a 442-residue protein sequence, read N- to C-terminus: D-serine dehydratase (442 aa).

Position 118 is an N6-(pyridoxal phosphate)lysine (Lys118).

This sequence belongs to the serine/threonine dehydratase family. DsdA subfamily. In terms of assembly, monomer. It depends on pyridoxal 5'-phosphate as a cofactor.

The enzyme catalyses D-serine = pyruvate + NH4(+). This chain is D-serine dehydratase, found in Escherichia coli O6:H1 (strain CFT073 / ATCC 700928 / UPEC).